We begin with the raw amino-acid sequence, 437 residues long: Tol-Pal system protein TolB (437 aa).

Residues M1 to G23 form the signal peptide.

Belongs to the TolB family. As to quaternary structure, the Tol-Pal system is composed of five core proteins: the inner membrane proteins TolA, TolQ and TolR, the periplasmic protein TolB and the outer membrane protein Pal. They form a network linking the inner and outer membranes and the peptidoglycan layer.

The protein localises to the periplasm. Functionally, part of the Tol-Pal system, which plays a role in outer membrane invagination during cell division and is important for maintaining outer membrane integrity. In Coxiella burnetii (strain RSA 493 / Nine Mile phase I), this protein is Tol-Pal system protein TolB.